The chain runs to 287 residues: Lipoyl synthase (287 aa).

[4Fe-4S] cluster is bound by residues Cys38, Cys43, Cys49, Cys64, Cys68, Cys71, and Ser277. Positions 50–266 constitute a Radical SAM core domain; it reads WSRGTATFLL…KTVAESLGLR (217 aa).

This sequence belongs to the radical SAM superfamily. Lipoyl synthase family. It depends on [4Fe-4S] cluster as a cofactor.

The protein resides in the cytoplasm. The enzyme catalyses [[Fe-S] cluster scaffold protein carrying a second [4Fe-4S](2+) cluster] + N(6)-octanoyl-L-lysyl-[protein] + 2 oxidized [2Fe-2S]-[ferredoxin] + 2 S-adenosyl-L-methionine + 4 H(+) = [[Fe-S] cluster scaffold protein] + N(6)-[(R)-dihydrolipoyl]-L-lysyl-[protein] + 4 Fe(3+) + 2 hydrogen sulfide + 2 5'-deoxyadenosine + 2 L-methionine + 2 reduced [2Fe-2S]-[ferredoxin]. It functions in the pathway protein modification; protein lipoylation via endogenous pathway; protein N(6)-(lipoyl)lysine from octanoyl-[acyl-carrier-protein]: step 2/2. Functionally, catalyzes the radical-mediated insertion of two sulfur atoms into the C-6 and C-8 positions of the octanoyl moiety bound to the lipoyl domains of lipoate-dependent enzymes, thereby converting the octanoylated domains into lipoylated derivatives. The chain is Lipoyl synthase from Chlorobium phaeobacteroides (strain DSM 266 / SMG 266 / 2430).